A 237-amino-acid polypeptide reads, in one-letter code: LexA repressor (237 aa).

The segment at residues 26–46 is a DNA-binding region (H-T-H motif); sequence FDEMKIALELTSKSGIHRLIT. Catalysis depends on for autocatalytic cleavage activity residues Ser-158 and Lys-196.

Belongs to the peptidase S24 family. Homodimer.

The catalysed reaction is Hydrolysis of Ala-|-Gly bond in repressor LexA.. Its function is as follows. Represses a number of genes involved in the response to DNA damage (SOS response), including recA and lexA. In the presence of single-stranded DNA, RecA interacts with LexA causing an autocatalytic cleavage which disrupts the DNA-binding part of LexA, leading to derepression of the SOS regulon and eventually DNA repair. This Bartonella quintana (strain Toulouse) (Rochalimaea quintana) protein is LexA repressor.